We begin with the raw amino-acid sequence, 192 residues long: MITISDAAQAHFVKLLADQPEGTHIRVFVISPGTAQAECGVSYCPPDAVESDDIELEFNGFSAMVDEKSAPFLEEASIDFVTDQLGSQLTLKAPNAKMRKVASDAPLAERVEYVIQSEINPQLASHGGNIMLVEITQEGVAVLQFGGGCNGCSQVDITLKDGIEKQLLDMFPGELSGVSDVTDHQHGAHSYA.

The [4Fe-4S] cluster site is built by Cys-149 and Cys-152.

Belongs to the NfuA family. As to quaternary structure, homodimer. The cofactor is [4Fe-4S] cluster.

In terms of biological role, involved in iron-sulfur cluster biogenesis. Binds a 4Fe-4S cluster, can transfer this cluster to apoproteins, and thereby intervenes in the maturation of Fe/S proteins. Could also act as a scaffold/chaperone for damaged Fe/S proteins. This chain is Fe/S biogenesis protein NfuA, found in Shewanella sp. (strain ANA-3).